The following is a 424-amino-acid chain: Probable threonylcarbamoyladenosine tRNA methylthiotransferase (424 aa).

Residues 4-115 (IRVYIETFGC…APQAVRAASN (112 aa)) form the MTTase N-terminal domain. [4Fe-4S] cluster contacts are provided by C13, C48, C79, C150, C154, and C157. The Radical SAM core domain occupies 136-365 (RSNPLIHIIP…EELKMRITEE (230 aa)). In terms of domain architecture, TRAM spans 368–424 (RRLVGSFQEILVVERGRKGGFIGRTGSYIPVVTETGEPGSFRRVRIRDATGTYLLAD).

It belongs to the methylthiotransferase family. CDKAL1 subfamily. The cofactor is [4Fe-4S] cluster.

It carries out the reaction N(6)-L-threonylcarbamoyladenosine(37) in tRNA + (sulfur carrier)-SH + AH2 + 2 S-adenosyl-L-methionine = 2-methylsulfanyl-N(6)-L-threonylcarbamoyladenosine(37) in tRNA + (sulfur carrier)-H + 5'-deoxyadenosine + L-methionine + A + S-adenosyl-L-homocysteine + 2 H(+). Catalyzes the methylthiolation of N6-threonylcarbamoyladenosine (t(6)A), leading to the formation of 2-methylthio-N6-threonylcarbamoyladenosine (ms(2)t(6)A) at position 37 in tRNAs that read codons beginning with adenine. The chain is Probable threonylcarbamoyladenosine tRNA methylthiotransferase from Methanothermobacter thermautotrophicus (strain ATCC 29096 / DSM 1053 / JCM 10044 / NBRC 100330 / Delta H) (Methanobacterium thermoautotrophicum).